The following is a 486-amino-acid chain: MSSVKRRKTDKNPSLEGLKSKKTKESKKESHTPSPEPIEDTEDNRVIEETEEAEEDDAPKSFKDLGIVDSLCEACDTLGYKAPTPIQRESIPLALQGRDLIGLAETGSGKTAAFALPILQALLDKPQPLFGLVLAPTRELAYQISQQFEALGSVIRVKCAVIVGGMDMVPQSIALGKKPHIIVATPGRLLDHLENTKGFSLRSLKYLVMDEADRLLDLDFGPILDKILKVLPRERRTYLFSATISSKVESLQRASLKDPLRVSISSNKYQTVSTLIQNYIFIPLIHKDTYLIYLLNEFAGQSAIIFTRTVNETQRIAILLRTLGFGAIPLHGQLSQSSRLGALNKFRAGSREILVATDVAARGLDIPSVDVVLNYDVPQDSKTYIHRVGRTARAGKSGHAISVVTQYDLEIFMRIEAALGKKQVEYPTVKDEVMVFKPRVEEAQRHARNEMKNLHEDRGKKGAVLKGRRPANGAKRGRDEMDREEG.

The disordered stretch occupies residues 1-60 (MSSVKRRKTDKNPSLEGLKSKKTKESKKESHTPSPEPIEDTEDNRVIEETEEAEEDDAPK). The Q motif signature appears at 60-88 (KSFKDLGIVDSLCEACDTLGYKAPTPIQR). Residues 91 to 262 (IPLALQGRDL…RASLKDPLRV (172 aa)) form the Helicase ATP-binding domain. 104–111 (AETGSGKT) contributes to the ATP binding site. Residues 210–213 (DEAD) carry the DEAD box motif. The 149-residue stretch at 286-434 (HKDTYLIYLL…EYPTVKDEVM (149 aa)) folds into the Helicase C-terminal domain. Composition is skewed to basic and acidic residues over residues 447–460 (ARNEMKNLHEDRGK) and 476–486 (RGRDEMDREEG). The interval 447–486 (ARNEMKNLHEDRGKKGAVLKGRRPANGAKRGRDEMDREEG) is disordered.

It belongs to the DEAD box helicase family. DDX47/RRP3 subfamily. In terms of assembly, interacts with the SSU processome.

It localises to the nucleus. The enzyme catalyses ATP + H2O = ADP + phosphate + H(+). ATP-dependent rRNA helicase required for pre-ribosomal RNA processing. Involved in the maturation of the 35S-pre-rRNA and to its cleavage to mature 18S rRNA. The protein is ATP-dependent rRNA helicase rrp3 of Botryotinia fuckeliana (strain B05.10) (Noble rot fungus).